Reading from the N-terminus, the 187-residue chain is MAIGMSELKKGLKIEIDGIPYRITEYQHVKPGKGAAFVRAKIKSFLDGKVIEKTFHAGDKCEEPNLQEKTMQFLYHDGGAFQFMDTTTYEQIALSDDQVGDVAKWIIDGLNVQILFHNEKAISVDVPLVVELTITETAPNFKGDTSSGGKKPATLETGAVVQVPFHVLEGEKIKVNTETGEYLEKVK.

It belongs to the elongation factor P family.

It localises to the cytoplasm. The protein operates within protein biosynthesis; polypeptide chain elongation. Involved in peptide bond synthesis. Stimulates efficient translation and peptide-bond synthesis on native or reconstituted 70S ribosomes in vitro. Probably functions indirectly by altering the affinity of the ribosome for aminoacyl-tRNA, thus increasing their reactivity as acceptors for peptidyl transferase. The polypeptide is Elongation factor P (Helicobacter hepaticus (strain ATCC 51449 / 3B1)).